A 735-amino-acid chain; its full sequence is Protostadienol synthase A (735 aa).

One copy of the PFTB 1 repeat lies at 129–170 (KNEMIRYLLNFVNEDGGWGLWINSPSTVFGTTMNYTMLRILG). Asp460 serves as the catalytic Proton donor. PFTB repeat units follow at residues 487 to 528 (LAEA…YDNV), 564 to 604 (MARC…ETVG), and 613 to 660 (CRNA…ALMG).

It belongs to the terpene cyclase/mutase family.

The enzyme catalyses (S)-2,3-epoxysqualene = (17Z)-protosta-17(20),24-dien-3beta-ol. In terms of biological role, protostadienol synthase which cyclizes (3S)-oxidosqualene to (17Z)-protosta-17(20),24-dien-3-beta-ol (protostadienol), the biosynthetic precursor of helvolic acid, a secondary metabolite which promotes virulence. In Arthroderma gypseum (strain ATCC MYA-4604 / CBS 118893) (Microsporum gypseum), this protein is Protostadienol synthase A (PDSA).